The sequence spans 226 residues: tRNA (guanine-N(1)-)-methyltransferase (226 aa).

S-adenosyl-L-methionine contacts are provided by residues glycine 110 and 129–134 (IGDYIL).

Belongs to the RNA methyltransferase TrmD family. As to quaternary structure, homodimer.

The protein localises to the cytoplasm. The catalysed reaction is guanosine(37) in tRNA + S-adenosyl-L-methionine = N(1)-methylguanosine(37) in tRNA + S-adenosyl-L-homocysteine + H(+). Functionally, specifically methylates guanosine-37 in various tRNAs. This chain is tRNA (guanine-N(1)-)-methyltransferase, found in Malacoplasma penetrans (strain HF-2) (Mycoplasma penetrans).